The following is a 759-amino-acid chain: LON peptidase N-terminal domain and RING finger protein 3 (759 aa).

The disordered stretch occupies residues 1–69 (MESVRIEQML…PGTSTPESKV (69 aa)). Residues 57 to 66 (EQSPGTSTPE) show a composition bias toward polar residues. The stretch at 67–100 (SKVLLTQADALASRGRIREALEVYRQLSERQQLV) is one TPR 1 repeat. Residues 158–196 (CRKCHGFLSDPVSLSCGHTFCKLCLERGRAADRRCALCG) form an RING-type 1 zinc finger. TPR repeat units follow at residues 243 to 276 (ASQL…APND), 278 to 310 (LLYS…RPMG), and 312 to 344 (KAHF…DGKN). Residues 360–454 (HCSSQEEAAA…TDQGDKPALS (95 aa)) are disordered. Positions 380 to 393 (AKVKGDGQQHHMKD) are enriched in basic and acidic residues. The segment at 467 to 505 (CALCMRLFYEPVTTPCGHTFCLKCLERCLDHNAKCPLCK) adopts an RING-type 2 zinc-finger fold. Residues 546–755 (MEELSNLNKN…GIRRVLAFIS (210 aa)) form the Lon N-terminal domain.

In Homo sapiens (Human), this protein is LON peptidase N-terminal domain and RING finger protein 3 (LONRF3).